The sequence spans 360 residues: Histidinol-phosphate aminotransferase (360 aa).

Lys-218 carries the post-translational modification N6-(pyridoxal phosphate)lysine.

The protein belongs to the class-II pyridoxal-phosphate-dependent aminotransferase family. Histidinol-phosphate aminotransferase subfamily. Homodimer. The cofactor is pyridoxal 5'-phosphate.

It carries out the reaction L-histidinol phosphate + 2-oxoglutarate = 3-(imidazol-4-yl)-2-oxopropyl phosphate + L-glutamate. It functions in the pathway amino-acid biosynthesis; L-histidine biosynthesis; L-histidine from 5-phospho-alpha-D-ribose 1-diphosphate: step 7/9. The chain is Histidinol-phosphate aminotransferase from Chlorobium phaeovibrioides (strain DSM 265 / 1930) (Prosthecochloris vibrioformis (strain DSM 265)).